The primary structure comprises 265 residues: Mlc titration factor A (265 aa).

Zn(2+)-binding residues include H111, H148, H152, and E211.

This sequence belongs to the MtfA family. Monomer in solution. Interacts with Mlc. It depends on Zn(2+) as a cofactor.

The protein resides in the cytoplasm. Its activity is regulated as follows. Association between Mlc and MtfA may induce structural changes that activate the peptidase activity of MtfA while inactivating the DNA-binding ability of Mlc. The aminopeptidase activity is partially inhibited by metal chelators such as EDTA and phenantroline, but not by inhibitors for serine-, aspartyl-, or cysteine-proteases. Involved in the modulation of the activity of the glucose-phosphotransferase system (glucose-PTS). Interacts with the transcriptional repressor Mlc, preventing its interaction with DNA and leading to the modulation of expression of genes regulated by Mlc, including ptsG, which encodes the PTS system glucose-specific EIICB component. Functionally, shows zinc-dependent metallopeptidase activity. In vitro, can cleave several artificial substrates. The highest activity is observed for L-alanine fused to 4-nitroanilide (L-alanine-pNA). Shows lower activity towards proline-pNA and valine-pNA. This is Mlc titration factor A from Klebsiella pneumoniae subsp. pneumoniae (strain ATCC 700721 / MGH 78578).